The sequence spans 235 residues: tRNA pseudouridine synthase B (235 aa).

Asp-48 functions as the Nucleophile in the catalytic mechanism.

The protein belongs to the pseudouridine synthase TruB family. Type 1 subfamily.

The enzyme catalyses uridine(55) in tRNA = pseudouridine(55) in tRNA. Responsible for synthesis of pseudouridine from uracil-55 in the psi GC loop of transfer RNAs. The sequence is that of tRNA pseudouridine synthase B from Parabacteroides distasonis (strain ATCC 8503 / DSM 20701 / CIP 104284 / JCM 5825 / NCTC 11152).